The primary structure comprises 1409 residues: Receptor-type tyrosine-protein phosphatase (1409 aa).

The signal sequence occupies residues 1-22 (MRINRWIWWATVILLYLRTGLA). The Extracellular segment spans residues 23 to 712 (ADFFRSSEEN…LLDTESSSSG (690 aa)). A disordered region spans residues 32–53 (NDRKSSDDLDNFNSTKIEPDKP). In terms of domain architecture, Ig-like C2-type spans 159–267 (PTKCDKRDLA…TASASDLDVT (109 aa)). Cysteines 189 and 255 form a disulfide. Fibronectin type-III domains follow at residues 276-366 (APRQ…TKQK) and 372-502 (KEED…AQPD). The helical transmembrane segment at 713–733 (FGIFMKIILPFLLFLAFATGV) threads the bilayer. The Cytoplasmic portion of the chain corresponds to 734-1409 (TMFFVNRKGH…LADYISKTYR (676 aa)). 2 Tyrosine-protein phosphatase domains span residues 793-1072 (FAQE…LAEW) and 1135-1403 (LEEE…LADY). Catalysis depends on phosphocysteine intermediate residues Cys1013 and Cys1344.

Belongs to the protein-tyrosine phosphatase family. Receptor class 2A subfamily. In terms of tissue distribution, expressed in muscles, hypodermis and a subset of neurons. Expressed in the AVA neurons, with high expression in the anterior half of the preanal ganglion where AVA neurons contact the PHB neurons.

The protein resides in the cell membrane. The protein localises to the synapse. The enzyme catalyses O-phospho-L-tyrosyl-[protein] + H2O = L-tyrosyl-[protein] + phosphate. Functionally, possesses an intrinsic protein tyrosine phosphatase (PTPase) activity. Regulates egl-15 activity which is required for hypodermis-mediated fluid homeostasis and protein degradation in muscle. During the formation of neuromuscular junctions at the larval stage, negatively regulates membrane protrusion from body wall muscles. Plays a role in nicotinic acetylcholine receptor (nAChR)-mediated sensitivity to nicotine. Regulates synaptic levels of nAchR subunit lev-1 in the nerve cord. Promotes the outgrowth of the quaternary dendritic branches of the PVD sensory neurons. In parallel to the sax-7/mnr-1 pathway, also controls the extension of the PVD primary branches. Acts in the netrin/DCC pathway to mediate the formation of synapses between the AVA interneurons and the PHB sensory neurons. Also required for the formation of synapses between the AVA interneurons and the VA10 motor neurons. This Caenorhabditis elegans protein is Receptor-type tyrosine-protein phosphatase.